Here is a 355-residue protein sequence, read N- to C-terminus: Guanine nucleotide-binding protein G(i) subunit alpha-2 (355 aa).

G2 carries the N-myristoyl glycine lipid modification. Residue C3 is the site of S-palmitoyl cysteine attachment. A G-alpha domain is found at 32–355; that stretch reads REVKLLLLGA…KNNLKDCGLF (324 aa). Residues 35–48 are G1 motif; the sequence is KLLLLGAGESGKST. Residues 40-47, 176-182, 201-205, 270-273, and A327 contribute to the GTP site; these read GAGESGKS, LRTRVKT, DVGGQ, and NKKD. S47 and T182 together coordinate Mg(2+). The tract at residues 174 to 182 is G2 motif; that stretch reads DVLRTRVKT. Residues 197–206 form a G3 motif region; the sequence is FKMFDVGGQR. Positions 266-273 are G4 motif; that stretch reads ILFLNKKD. The segment at 325-330 is G5 motif; the sequence is TCATDT.

This sequence belongs to the G-alpha family. G(i/o/t/z) subfamily. G proteins are composed of 3 units; alpha, beta and gamma. The alpha chain contains the guanine nucleotide binding site. In this context, interacts with GNB2. Interacts with UNC5B. Interacts with GPSM1. Interacts with RGS12 and RGS14. Interacts (inactive GDP-bound form) with NUCB1 (via GBA motif); the interaction leads to activation of GNAI3. Interacts (inactive GDP-bound form) with CCDC88C/DAPLE (via GBA motif). Interacts (inactive GDP-bound form) with CCDC8A/GIV (via GBA motif).

It is found in the cytoplasm. The protein resides in the cell membrane. Its subcellular location is the cytoskeleton. It localises to the microtubule organizing center. The protein localises to the centrosome. It is found in the membrane. In terms of biological role, guanine nucleotide-binding proteins (G proteins) are involved as modulators or transducers in various transmembrane signaling systems. The G(i) proteins are involved in hormonal regulation of adenylate cyclase: they inhibit the cyclase in response to beta-adrenergic stimuli. May play a role in cell division. The protein is Guanine nucleotide-binding protein G(i) subunit alpha-2 (Gnai2) of Rattus norvegicus (Rat).